The chain runs to 436 residues: UPF0229 protein mll9637 (436 aa).

The disordered stretch occupies residues 54–103 (IPRKGTGEPTFGDDKESGRRQHILPGNRTFSSGDLIPKPGGGGGYGSAAG).

It belongs to the UPF0229 family.

This is UPF0229 protein mll9637 from Mesorhizobium japonicum (strain LMG 29417 / CECT 9101 / MAFF 303099) (Mesorhizobium loti (strain MAFF 303099)).